A 121-amino-acid polypeptide reads, in one-letter code: uncharacterized protein (121 aa).

The 44-residue stretch at 43–86 (LKECSSHVAAFADCSKDKYISVVWECRELQQLMKNCLVEYTTSE) folds into the CHCH domain. Short sequence motifs (cx9C motif) lie at residues 46–56 (CSSHVAAFADC) and 68–78 (CRELQQLMKNC). 2 disulfide bridges follow: Cys46-Cys78 and Cys56-Cys68.

It belongs to the CMC family.

This is an uncharacterized protein from Dictyostelium discoideum (Social amoeba).